Consider the following 448-residue polypeptide: Antizyme inhibitor 1 (448 aa).

The protein belongs to the Orn/Lys/Arg decarboxylase class-II family. ODC antizyme inhibitor subfamily. In terms of assembly, monomer. Interacts with OAZ1 and OAZ3; this interaction disrupts the interaction between the antizyme and ODC1. Post-translationally, ubiquitinated, leading to its proteasomal degradation; a process that is reduced in presence of antizyme OAZ1.

It localises to the nucleus. In terms of biological role, antizyme inhibitor (AZI) protein that positively regulates ornithine decarboxylase (ODC) activity and polyamine uptake. AZI is an enzymatically inactive ODC homolog that counteracts the negative effect of ODC antizymes (AZs) OAZ1, OAZ2 and OAZ3 on ODC activity by competing with ODC for antizyme-binding. Inhibits antizyme-dependent ODC degradation and releases ODC monomers from their inactive complex with antizymes, leading to formation of the catalytically active ODC homodimer and restoring polyamine production. This Pongo abelii (Sumatran orangutan) protein is Antizyme inhibitor 1 (AZIN1).